Here is a 172-residue protein sequence, read N- to C-terminus: Ribosome maturation factor RimM (172 aa).

The PRC barrel domain occupies 96-168; the sequence is EGEFYYHQII…RVDVELMEGL (73 aa).

Belongs to the RimM family. Binds ribosomal protein uS19.

Its subcellular location is the cytoplasm. Functionally, an accessory protein needed during the final step in the assembly of 30S ribosomal subunit, possibly for assembly of the head region. Essential for efficient processing of 16S rRNA. May be needed both before and after RbfA during the maturation of 16S rRNA. It has affinity for free ribosomal 30S subunits but not for 70S ribosomes. The polypeptide is Ribosome maturation factor RimM (Streptococcus pyogenes serotype M18 (strain MGAS8232)).